The sequence spans 530 residues: Membrane protein insertase YidC (530 aa).

4 helical membrane-spanning segments follow: residues 5–25 (VVIAVILSIVVLYAFSYMFPP), 348–368 (YGLAIIIITIILKVLFFPLTH), 418–438 (LPMLVQIPVFFALYKALMFSI), and 492–512 (PVVFTFMFLNFPAGLVLYWLI).

Belongs to the OXA1/ALB3/YidC family. Type 1 subfamily. As to quaternary structure, interacts with the Sec translocase complex via SecD. Specifically interacts with transmembrane segments of nascent integral membrane proteins during membrane integration.

It is found in the cell inner membrane. Required for the insertion and/or proper folding and/or complex formation of integral membrane proteins into the membrane. Involved in integration of membrane proteins that insert both dependently and independently of the Sec translocase complex, as well as at least some lipoproteins. Aids folding of multispanning membrane proteins. The sequence is that of Membrane protein insertase YidC from Geotalea daltonii (strain DSM 22248 / JCM 15807 / FRC-32) (Geobacter daltonii).